We begin with the raw amino-acid sequence, 1009 residues long: Type VII secretion system accessory factor EsaA (1009 aa).

6 helical membrane passes run 7–27, 822–842, 869–889, 903–923, 928–948, and 979–999; these read IYAL…IFFV, ISPT…AYIF, AITS…VGLI, KFIL…TYLL, SIGM…MNNL, and IGLA…LNMF.

It belongs to the EsaA family. As to quaternary structure, homodimer. Interacts with EssB.

It localises to the cell membrane. Component of the type VII secretion system (Ess). Provides together with EssB and other components such as EssC and EssE a secretion platform across the cytoplasmic membrane in the host. The chain is Type VII secretion system accessory factor EsaA from Staphylococcus aureus (strain MRSA252).